Here is a 135-residue protein sequence, read N- to C-terminus: Probable histone H2A.7 (135 aa).

The protein belongs to the histone H2A family. In terms of assembly, the nucleosome is a histone octamer containing two molecules each of H2A, H2B, H3 and H4 assembled in one H3-H4 heterotetramer and two H2A-H2B heterodimers. The octamer wraps approximately 147 bp of DNA.

The protein resides in the nucleus. The protein localises to the chromosome. Its function is as follows. Core component of nucleosome. Nucleosomes wrap and compact DNA into chromatin, limiting DNA accessibility to the cellular machineries which require DNA as a template. Histones thereby play a central role in transcription regulation, DNA repair, DNA replication and chromosomal stability. DNA accessibility is regulated via a complex set of post-translational modifications of histones, also called histone code, and nucleosome remodeling. The chain is Probable histone H2A.7 from Oryza sativa subsp. indica (Rice).